Reading from the N-terminus, the 235-residue chain is Nucleoside diphosphate kinase 4, chloroplastic (235 aa).

Positions 93, 141, 169, 175, 186, and 196 each coordinate ATP. Histidine 199 acts as the Pros-phosphohistidine intermediate in catalysis.

The protein belongs to the NDK family. As to quaternary structure, homohexamer. It depends on Mg(2+) as a cofactor.

The protein localises to the plastid. The protein resides in the chloroplast thylakoid lumen. It carries out the reaction a 2'-deoxyribonucleoside 5'-diphosphate + ATP = a 2'-deoxyribonucleoside 5'-triphosphate + ADP. The catalysed reaction is a ribonucleoside 5'-diphosphate + ATP = a ribonucleoside 5'-triphosphate + ADP. Major role in the synthesis of nucleoside triphosphates other than ATP. The ATP gamma phosphate is transferred to the NDP beta phosphate via a ping-pong mechanism, using a phosphorylated active-site intermediate. Shows the highest specificity towards GDP. The protein is Nucleoside diphosphate kinase 4, chloroplastic (NDK4) of Spinacia oleracea (Spinach).